We begin with the raw amino-acid sequence, 287 residues long: ATP synthase gamma chain (287 aa).

Belongs to the ATPase gamma chain family. As to quaternary structure, F-type ATPases have 2 components, CF(1) - the catalytic core - and CF(0) - the membrane proton channel. CF(1) has five subunits: alpha(3), beta(3), gamma(1), delta(1), epsilon(1). CF(0) has three main subunits: a, b and c.

It localises to the cell inner membrane. Functionally, produces ATP from ADP in the presence of a proton gradient across the membrane. The gamma chain is believed to be important in regulating ATPase activity and the flow of protons through the CF(0) complex. This chain is ATP synthase gamma chain, found in Citrobacter koseri (strain ATCC BAA-895 / CDC 4225-83 / SGSC4696).